A 108-amino-acid chain; its full sequence is ER membrane protein complex subunit 6 (108 aa).

3 helical membrane-spanning segments follow: residues 21–41 (VVSFVRNLTSSFFGCAAGILG), 45–65 (YEGLALYVLGYFFVSFLLFAL), and 86–106 (ILDGAPSYVLTWTLFYSLVYV).

The protein belongs to the EMC6 family.

The protein resides in the endoplasmic reticulum membrane. The chain is ER membrane protein complex subunit 6 from Schizosaccharomyces pombe (strain 972 / ATCC 24843) (Fission yeast).